Reading from the N-terminus, the 1089-residue chain is GPI ethanolamine phosphate transferase 3, catalytic subunit (1089 aa).

A helical membrane pass occupies residues 4 to 24; it reads ASVLLFLAWVCFLFYAGIALF. A glycan (N-linked (GlcNAc...) asparagine) is linked at asparagine 268. Helical transmembrane passes span 457–477, 482–502, 510–530, 541–561, 575–595, 668–688, 701–721, 747–767, 830–850, 857–877, 944–964, 1014–1034, and 1048–1068; these read LLAASCFICLLASQWAISPGF, LLLTPVAWGLVGAIAYAGLLG, LVLLGAVAAVSSFLPFLWKAW, TLFPIPGPVLLLLLFRLAVFF, FLLGSFILLLVVQLHWEGQLL, LWYGACVAALVALLAAVRLWL, MLFVRWGLPLMALGTAAYWAL, VAGLAASGLALLLWKPVTVLV, SVYSAAMVTALTLLAFPLLLL, LVFLLLFLQSFLLLHLLAAGI, FASHLLFAVGCPLLLLWPFLC, LKYLFILGIQILACALAASIL, and FIFEAVGFIVSSVGLLLGIAL.

The protein belongs to the PIGG/PIGN/PIGO family. PIGO subfamily. Part of the ethanolamine phosphate transferase 3 complex composed by PIGO and PIGF. PIGF is required to stabilize PIGO.

The protein localises to the endoplasmic reticulum membrane. Its pathway is glycolipid biosynthesis; glycosylphosphatidylinositol-anchor biosynthesis. Catalytic subunit of the ethanolamine phosphate transferase 3 complex that transfers an ethanolamine phosphate (EtNP) from a phosphatidylethanolamine (PE) to the 6-OH position of the third alpha-1,2-linked mannose of an alpha-D-Man-(1-&gt;2)-alpha-D-Man-(1-&gt;6)-2-PEtn-alpha-D-Man-(1-&gt;4)-alpha-D-GlcN-(1-&gt;6)-(1-radyl,2-acyl-sn-glycero-3-phospho)-2-acyl-inositol (also termed H6) intermediate to generate a 6-PEtn-alpha-D-Man-(1-&gt;2)-alpha-D-Man-(1-&gt;6)-2-PEtn-alpha-D-Man-(1-&gt;4)-alpha-D-GlcN-(1-&gt;6)-(1-radyl,2-acyl-sn-glycero-3-phospho)-2-acyl-inositol (also termed H7) and participates in the tenth step of the glycosylphosphatidylinositol-anchor biosynthesis. This Homo sapiens (Human) protein is GPI ethanolamine phosphate transferase 3, catalytic subunit.